The sequence spans 430 residues: Serine--tRNA ligase (430 aa).

L-serine is bound at residue 234 to 236 (TAE). 265–267 (RRE) contacts ATP. Position 288 (Glu-288) interacts with L-serine. 352–355 (EISS) contacts ATP. Residue Ser-388 participates in L-serine binding.

The protein belongs to the class-II aminoacyl-tRNA synthetase family. Type-1 seryl-tRNA synthetase subfamily. In terms of assembly, homodimer. The tRNA molecule binds across the dimer.

Its subcellular location is the cytoplasm. The catalysed reaction is tRNA(Ser) + L-serine + ATP = L-seryl-tRNA(Ser) + AMP + diphosphate + H(+). It catalyses the reaction tRNA(Sec) + L-serine + ATP = L-seryl-tRNA(Sec) + AMP + diphosphate + H(+). The protein operates within aminoacyl-tRNA biosynthesis; selenocysteinyl-tRNA(Sec) biosynthesis; L-seryl-tRNA(Sec) from L-serine and tRNA(Sec): step 1/1. In terms of biological role, catalyzes the attachment of serine to tRNA(Ser). Is also able to aminoacylate tRNA(Sec) with serine, to form the misacylated tRNA L-seryl-tRNA(Sec), which will be further converted into selenocysteinyl-tRNA(Sec). This chain is Serine--tRNA ligase, found in Thermosynechococcus vestitus (strain NIES-2133 / IAM M-273 / BP-1).